Consider the following 514-residue polypeptide: Adenylosuccinate synthetase 2, chloroplastic (514 aa).

A chloroplast-targeting transit peptide spans 1-56; sequence MAMAAAAAVASQGLLATSSQQQKKSSAKLICNAATFFSGKRLLWVKSCNNGAVGLR. GTP is bound by residues 100–106 and 128–130; these read GDEGKGK and GHT. The active-site Proton acceptor is the Asp101. Mg(2+)-binding residues include Asp101 and Gly128. IMP contacts are provided by residues 101-104, 126-129, Thr218, Arg232, Gln312, Thr327, and Arg391; these read DEGK and NAGH. His129 (proton donor) is an active-site residue. 387 to 393 lines the substrate pocket; it reads TTTGRPR. Residues Arg393, 419-421, and 502-504 each bind GTP; these read KLD and GVG.

This sequence belongs to the adenylosuccinate synthetase family. Homodimer. Requires Mg(2+) as cofactor.

It localises to the plastid. The protein resides in the chloroplast. It catalyses the reaction IMP + L-aspartate + GTP = N(6)-(1,2-dicarboxyethyl)-AMP + GDP + phosphate + 2 H(+). The protein operates within purine metabolism; AMP biosynthesis via de novo pathway; AMP from IMP: step 1/2. In terms of biological role, plays an important role in the de novo pathway and in the salvage pathway of purine nucleotide biosynthesis. Catalyzes the first committed step in the biosynthesis of AMP from IMP. The sequence is that of Adenylosuccinate synthetase 2, chloroplastic from Physcomitrium patens (Spreading-leaved earth moss).